The chain runs to 546 residues: MTPGEVRRLYFIIRTFLSYGLDELIPKMRITLPLRLWRYSLFWMPNRHKDKPLGERLRLALQELGPVWIKFGQMLSTRRDLFPPHIADQLALLQDKVAPFDGKLAKQQIEAAMGGLPVEAWFDDFEIKPLASASIAQVHTARLKSNGKEVVIKVIRPDILPVIKADLKLIYRLARWVPRLLPDGRRLRPTEVVREYEKTLIDELNLLRESANAIQLRRNFEDSPMLYIPEVYPDYCSEGMMVMERIYGIPVSDVATLEKNGTNMKLLAERGVQVFFTQVFRDSFFHADMHPGNIFVSYEHPENPKYIGIDCGIVGSLNKEDKRYLAENFIAFFNRDYRKVAELHVDSGWVPPDTNVEEFEFAIRTVCEPIFEKPLAEISFGHVLLNLFNTARRFNMEVQPQLVLLQKTLLYVEGVGRQLYPQLDLWKTAKPFLESWIKDQVGIPALVRAFKEKAPFWVEKMPELPELVYDSLRQGKYLQHSVDKIARELQSNHVRQGQSRYFLGIGATLVLSGTFLLVSRPEWGLMPGWLMAGGLIAWFVGWRKTR.

Residues 124–502 (DFEIKPLASA…HVRQGQSRYF (379 aa)) enclose the Protein kinase domain. Residues 130 to 138 (LASASIAQV) and Lys-153 each bind ATP. Catalysis depends on Asp-288, which acts as the Proton acceptor. Helical transmembrane passes span 501–521 (YFLGIGATLVLSGTFLLVSRP) and 522–542 (EWGLMPGWLMAGGLIAWFVGW).

It belongs to the ABC1 family. UbiB subfamily.

It localises to the cell inner membrane. The protein operates within cofactor biosynthesis; ubiquinone biosynthesis [regulation]. In terms of biological role, is probably a protein kinase regulator of UbiI activity which is involved in aerobic coenzyme Q (ubiquinone) biosynthesis. This Escherichia coli O45:K1 (strain S88 / ExPEC) protein is Probable protein kinase UbiB.